A 340-amino-acid chain; its full sequence is 4-dimethylallyltryptophan N-methyltransferase easF (340 aa).

The protein belongs to the methyltransferase superfamily. Homodimer.

The enzyme catalyses 4-(3-methylbut-2-enyl)-L-tryptophan + S-adenosyl-L-methionine = 4-(3-methylbut-2-enyl)-L-abrine + S-adenosyl-L-homocysteine + H(+). It participates in alkaloid biosynthesis; ergot alkaloid biosynthesis. In terms of biological role, 4-dimethylallyltryptophan N-methyltransferase; part of the gene cluster that mediates the biosynthesis of fungal ergot alkaloid. DmaW catalyzes the first step of ergot alkaloid biosynthesis by condensing dimethylallyl diphosphate (DMAP) and tryptophan to form 4-dimethylallyl-L-tryptophan. The second step is catalyzed by the methyltransferase easF that methylates 4-dimethylallyl-L-tryptophan in the presence of S-adenosyl-L-methionine, resulting in the formation of 4-dimethylallyl-L-abrine. The catalase easC and the FAD-dependent oxidoreductase easE then transform 4-dimethylallyl-L-abrine to chanoclavine-I which is further oxidized by easD in the presence of NAD(+), resulting in the formation of chanoclavine-I aldehyde. Chanoclavine-I aldehyde is the precursor of ergoamides and ergopeptines in Clavicipitaceae, and clavine-type alcaloids such as fumiclavine in Trichocomaceae. However, the metabolites downstream of chanoclavine-I aldehyde in Arthrodermataceae have not been identified yet. In Arthroderma benhamiae (strain ATCC MYA-4681 / CBS 112371) (Trichophyton mentagrophytes), this protein is 4-dimethylallyltryptophan N-methyltransferase easF.